A 351-amino-acid chain; its full sequence is Protein-glutamate methylesterase/protein-glutamine glutaminase (351 aa).

The region spanning 6–123 (RVLVVDDSPT…ARPFGDLADK (118 aa)) is the Response regulatory domain. Aspartate 57 carries the 4-aspartylphosphate modification. The CheB-type methylesterase domain occupies 154–346 (YRAGRKVVAI…EEILKLTTAR (193 aa)). Catalysis depends on residues serine 166, histidine 192, and aspartate 288.

The protein belongs to the CheB family. Post-translationally, phosphorylated by CheA. Phosphorylation of the N-terminal regulatory domain activates the methylesterase activity.

The protein localises to the cytoplasm. It carries out the reaction [protein]-L-glutamate 5-O-methyl ester + H2O = L-glutamyl-[protein] + methanol + H(+). It catalyses the reaction L-glutaminyl-[protein] + H2O = L-glutamyl-[protein] + NH4(+). Functionally, involved in chemotaxis. Part of a chemotaxis signal transduction system that modulates chemotaxis in response to various stimuli. Catalyzes the demethylation of specific methylglutamate residues introduced into the chemoreceptors (methyl-accepting chemotaxis proteins or MCP) by CheR. Also mediates the irreversible deamidation of specific glutamine residues to glutamic acid. The sequence is that of Protein-glutamate methylesterase/protein-glutamine glutaminase from Agrobacterium fabrum (strain C58 / ATCC 33970) (Agrobacterium tumefaciens (strain C58)).